Here is a 306-residue protein sequence, read N- to C-terminus: N-acetylmuramic acid 6-phosphate etherase (306 aa).

Residues 59–222 (ISEALRQGGR…STGAMVQLGK (164 aa)) enclose the SIS domain. Glu87 (proton donor) is an active-site residue. Residue Glu118 is part of the active site.

Belongs to the GCKR-like family. MurNAc-6-P etherase subfamily. As to quaternary structure, homodimer.

The enzyme catalyses N-acetyl-D-muramate 6-phosphate + H2O = N-acetyl-D-glucosamine 6-phosphate + (R)-lactate. It participates in amino-sugar metabolism; N-acetylmuramate degradation. In terms of biological role, specifically catalyzes the cleavage of the D-lactyl ether substituent of MurNAc 6-phosphate, producing GlcNAc 6-phosphate and D-lactate. The polypeptide is N-acetylmuramic acid 6-phosphate etherase (Gloeothece citriformis (strain PCC 7424) (Cyanothece sp. (strain PCC 7424))).